The primary structure comprises 953 residues: Trafficking kinesin-binding protein 1 (953 aa).

Residues 47 to 354 enclose the HAP1 N-terminal domain; it reads LEEQLPHYKL…EELKNLRNKT (308 aa). A coiled-coil region spans residues 104–356; the sequence is QMTKTYNDID…LKNLRNKTMP (253 aa). An interaction with HGS region spans residues 359-509; sequence TSRRYHSLGL…RRLSLRRENY (151 aa). A glycan (O-linked (GlcNAc) serine) is linked at serine 447. The interval 472 to 495 is disordered; the sequence is AADLGNDERSKKPGTPGTPGSHDL. Positions 492–532 form a coiled coil; sequence SHDLETALRRLSLRRENYLSERRFFEEEQERKLQELAEKGE. Serine 537 is subject to Phosphoserine. Positions 658-672 are interaction with OGT; sequence PGKCMSQTNSTFTFT. 2 O-linked (GlcNAc) serine glycosylation sites follow: serine 680 and serine 719. Phosphoserine is present on serine 719. Positions 777 to 796 are disordered; it reads VIPSTPPNSPMQTPTSSPPS. Residues 786–796 are compositionally biased toward low complexity; sequence PMQTPTSSPPS. Serine 919 bears the Phosphoserine mark. O-linked (GlcNAc) threonine glycosylation occurs at threonine 935.

It belongs to the milton family. In terms of assembly, interacts with RHOT1 and RHOT2. Found in a complex with KIF5B, OGT, RHOT1 and RHOT2. Interacts with HGS. Interacts with GABRA1. Interacts with KIF5C. Interacts with OGT; stable interaction is not required for glycosylation of this protein by OGT. Isoform 1 interacts with OGT. Post-translationally, O-glycosylated. Glycosylated by OGT; glycosylation in response to increased extracellular glucose levels is required for and leads to regulation of mitochondrial motility by OGT. High expression in spinal cord and moderate expression in all other tissues and specific brain regions examined. Expressed in all cell lines examined.

It localises to the cytoplasm. The protein localises to the nucleus. Its subcellular location is the mitochondrion. The protein resides in the early endosome. It is found in the endosome. It localises to the mitochondrion membrane. The protein localises to the cell cortex. Involved in the regulation of endosome-to-lysosome trafficking, including endocytic trafficking of EGF-EGFR complexes and GABA-A receptors. Involved in mitochondrial motility. When O-glycosylated, abolishes mitochondrial motility. Crucial for recruiting OGT to the mitochondrial surface of neuronal processes. TRAK1 and RHOT form an essential protein complex that links KIF5 to mitochondria for light chain-independent, anterograde transport of mitochondria. This Homo sapiens (Human) protein is Trafficking kinesin-binding protein 1 (TRAK1).